A 244-amino-acid chain; its full sequence is Lactate utilization protein A (244 aa).

It belongs to the LutA/YkgE family.

Functionally, is involved in L-lactate degradation and allows cells to grow with lactate as the sole carbon source. The sequence is that of Lactate utilization protein A from Halalkalibacterium halodurans (strain ATCC BAA-125 / DSM 18197 / FERM 7344 / JCM 9153 / C-125) (Bacillus halodurans).